The following is a 217-amino-acid chain: Probable GTP-binding protein EngB (217 aa).

The EngB-type G domain occupies 29–213; that stretch reads GPPEVAFAGR…RQAIAETVGI (185 aa). GTP contacts are provided by residues 37–44, 64–68, 91–94, 158–161, and 192–194; these read GRSNVGKS, GRTQE, DMPG, TKTD, and TSS. Positions 44 and 66 each coordinate Mg(2+).

Belongs to the TRAFAC class TrmE-Era-EngA-EngB-Septin-like GTPase superfamily. EngB GTPase family. Requires Mg(2+) as cofactor.

Functionally, necessary for normal cell division and for the maintenance of normal septation. The protein is Probable GTP-binding protein EngB of Rhizobium etli (strain ATCC 51251 / DSM 11541 / JCM 21823 / NBRC 15573 / CFN 42).